A 370-amino-acid polypeptide reads, in one-letter code: Aldo-keto reductase NECHADRAFT_45914 (370 aa).

Asp78 serves as a coordination point for NADP(+). The Proton donor role is filled by Tyr83. His174 lines the substrate pocket. Residues 204-205 (SS), Gln230, 259-269 (APLASGRLARR), and 333-341 (STVQRIEEA) each bind NADP(+).

It belongs to the aldo/keto reductase family.

The protein operates within secondary metabolite biosynthesis. Functionally, aldo-keto reductase; part of the gene cluster that mediates the biosynthesis of sansalvamide, a cyclic pentadepsipeptide that shows promising results as potential anti-cancer drug. The nonribosmal peptide synthetase NRPS30 produces sansalvamide by incorporating successively one phenylalanine, one leucine, one alpha-hydroxyisocaproic acid (HICA), one valine and one leucine before sansalvamide is released from by cyclization by the terminal C domain of NRPS30. The HICA residue is probably provided by reduction of alpha-ketoisocaproate by the cluster-specific aldo-keto reductase (NECHADRAFT_45914). This Fusarium vanettenii (strain ATCC MYA-4622 / CBS 123669 / FGSC 9596 / NRRL 45880 / 77-13-4) (Fusarium solani subsp. pisi) protein is Aldo-keto reductase NECHADRAFT_45914.